The sequence spans 306 residues: Curved DNA-binding protein (306 aa).

The 65-residue stretch at 5–69 (DYYAIMGVKP…QRRAEYDQMW (65 aa)) folds into the J domain.

Its subcellular location is the cytoplasm. It localises to the nucleoid. DNA-binding protein that preferentially recognizes a curved DNA sequence. It is probably a functional analog of DnaJ; displays overlapping activities with DnaJ, but functions under different conditions, probably acting as a molecular chaperone in an adaptive response to environmental stresses other than heat shock. Lacks autonomous chaperone activity; binds native substrates and targets them for recognition by DnaK. Its activity is inhibited by the binding of CbpM. In Escherichia coli (strain 55989 / EAEC), this protein is Curved DNA-binding protein.